The sequence spans 207 residues: Large ribosomal subunit protein bL25 (207 aa).

Belongs to the bacterial ribosomal protein bL25 family. CTC subfamily. Part of the 50S ribosomal subunit; part of the 5S rRNA/L5/L18/L25 subcomplex. Contacts the 5S rRNA. Binds to the 5S rRNA independently of L5 and L18.

Functionally, this is one of the proteins that binds to the 5S RNA in the ribosome where it forms part of the central protuberance. The chain is Large ribosomal subunit protein bL25 from Rhizorhabdus wittichii (strain DSM 6014 / CCUG 31198 / JCM 15750 / NBRC 105917 / EY 4224 / RW1) (Sphingomonas wittichii).